Consider the following 114-residue polypeptide: Fluoride-specific ion channel FluC 1 (114 aa).

The next 3 helical transmembrane spans lie at 23–43 (ATLT…SYVF), 52–72 (LSTA…TLSV), and 84–104 (FLAM…SHLG). Na(+) contacts are provided by glycine 62 and threonine 65.

Belongs to the fluoride channel Fluc/FEX (TC 1.A.43) family.

It is found in the cell membrane. The catalysed reaction is fluoride(in) = fluoride(out). Na(+) is not transported, but it plays an essential structural role and its presence is essential for fluoride channel function. In terms of biological role, fluoride-specific ion channel. Important for reducing fluoride concentration in the cell, thus reducing its toxicity. The protein is Fluoride-specific ion channel FluC 1 of Desulfitobacterium hafniense (strain Y51).